The primary structure comprises 282 residues: Bis(5'-nucleosyl)-tetraphosphatase, symmetrical (282 aa).

This sequence belongs to the Ap4A hydrolase family.

The enzyme catalyses P(1),P(4)-bis(5'-adenosyl) tetraphosphate + H2O = 2 ADP + 2 H(+). Functionally, hydrolyzes diadenosine 5',5'''-P1,P4-tetraphosphate to yield ADP. This Escherichia coli O7:K1 (strain IAI39 / ExPEC) protein is Bis(5'-nucleosyl)-tetraphosphatase, symmetrical.